The following is a 165-amino-acid chain: Large ribosomal subunit protein uL10 (165 aa).

This sequence belongs to the universal ribosomal protein uL10 family. Part of the ribosomal stalk of the 50S ribosomal subunit. The N-terminus interacts with L11 and the large rRNA to form the base of the stalk. The C-terminus forms an elongated spine to which L12 dimers bind in a sequential fashion forming a multimeric L10(L12)X complex.

In terms of biological role, forms part of the ribosomal stalk, playing a central role in the interaction of the ribosome with GTP-bound translation factors. In Burkholderia mallei (strain NCTC 10229), this protein is Large ribosomal subunit protein uL10.